The chain runs to 173 residues: Photosystem I assembly protein Ycf3 (173 aa).

TPR repeat units follow at residues 35-68, 72-105, and 120-153; these read AYIY…EENK, GETL…NPKQ, and GRNA…YPGG.

The protein belongs to the Ycf3 family.

It is found in the cellular thylakoid membrane. In terms of biological role, essential for the assembly of the photosystem I (PSI) complex. May act as a chaperone-like factor to guide the assembly of the PSI subunits. In Prochlorococcus marinus (strain MIT 9301), this protein is Photosystem I assembly protein Ycf3.